We begin with the raw amino-acid sequence, 441 residues long: Nucleoprotein (441 aa).

At S5 the chain carries Phosphoserine; by host. A CoV N NTD domain is found at 14–136 (VPLSLYAPLR…QLPSVVEIVE (123 aa)). The interval 16–146 (LSLYAPLRVT…PNTPPASRAN (131 aa)) is RNA-binding. 2 disordered regions span residues 131–219 (VVEI…VTSR) and 231–278 (KSLG…LKDI). Residue S143 is modified to Phosphoserine; by host. Residues 143–215 (SRANSRSRSR…NRNQSNDRGG (73 aa)) are compositionally biased toward low complexity. 2 stretches are compositionally biased toward basic and acidic residues: residues 238-255 (NPDR…KSDN) and 269-278 (TSKERDLKDI). Residues 266–382 (SRATSKERDL…AFKTGNAKLQ (117 aa)) form the CoV N CTD domain. Positions 277–379 (DIPEWRRIPK…QVDAFKTGNA (103 aa)) are dimerization.

This sequence belongs to the alphacoronavirus nucleocapsid protein family. As to quaternary structure, homooligomer. Both monomeric and oligomeric forms interact with RNA. Interacts with protein M. Interacts with NSP3; this interaction serves to tether the genome to the newly translated replicase-transcriptase complex at a very early stage of infection. Interacts with host RSAD2; this interaction inhibits viral replication. Post-translationally, ADP-ribosylated. The ADP-ribosylation is retained in the virion during infection. In terms of processing, phosphorylated on serine and threonine residues.

The protein localises to the virion. It is found in the host endoplasmic reticulum-Golgi intermediate compartment. It localises to the host Golgi apparatus. Functionally, packages the positive strand viral genome RNA into a helical ribonucleocapsid (RNP) and plays a fundamental role during virion assembly through its interactions with the viral genome and membrane protein M. Plays an important role in enhancing the efficiency of subgenomic viral RNA transcription as well as viral replication. The protein is Nucleoprotein of Porcine epidemic diarrhea virus (strain CV777) (PEDV).